The chain runs to 307 residues: MGTVLSLSPSYRKATLFEDGAATVGHYTAVQNSKNAKDKNLKRHSIISVLPWKRIVAVSAKKKNSKKVQPNSSYQNNITHLNNENLKKSLSCANLSTFAQPPPAQPPAPPASQLSGSQTGVSSSVKKAPHPAVSSAGTPKRVIVQASTSELLRCLGEFLCRRCYRLKHLSPTDPVLWLRSVDRSLLLQGWQDQGFITPANVVFLYMLCRDVISSEVGSDHELQAVLLTCLYLSYSYMGNEISYPLKPFLVESCKEAFWDRCLSVINLMSSKMLQINADPHYFTQVFSDLKNESGQEDKKRLLLGLDR.

Residue G2 is the site of N-myristoyl glycine attachment. Residue S8 is modified to Phosphoserine; by CDK5. Residues T97–S135 form a disordered region. Positions Q100–P110 are enriched in pro residues. A compositionally biased stretch (polar residues) spans S112 to V125. T138 carries the phosphothreonine; by CDK5 modification.

The protein belongs to the cyclin-dependent kinase 5 activator family. Heterodimer composed of a catalytic subunit CDK5 and a regulatory subunit CDK5R1 (p25) and macromolecular complex composed of at least CDK5, CDK5R1 (p35) and CDK5RAP1 or CDK5RAP2 or CDK5RAP3. Only the heterodimer shows kinase activity. Interacts with EPHA4 and NGEF; may mediate the activation of NGEF by EPHA4. Interacts with RASGRF2. The complex p35/CDK5 interacts with CLOCK. In terms of processing, the p35 form is proteolytically cleaved by calpain, giving rise to the p25 form. P35 has a 5 to 10 fold shorter half-life compared to p25. The conversion results in deregulation of the CDK5 kinase: p25/CDK5 kinase displays an increased and altered tau phosphorylation in comparison to the p35/CDK5 kinase in vivo. Post-translationally, myristoylated. A proper myristoylation signal is essential for the proper distribution of p35. Phosphorylation at Ser-8 and Thr-138 by CDK5 prevents calpain-mediated proteolysis. In terms of processing, ubiquitinated, leading to its degradation: degradation of p35 by proteasome results in down-regulation of CDK5 activity. During this process, CDK5 phosphorylates p35 and induces its ubiquitination and subsequent degradation. Ubiquitinated by the CRL2(FEM1B) complex, which recognizes the -Gly-Leu-Asp-Arg C-degron at the C-terminus, leading to its degradation. In terms of tissue distribution, brain and neuron specific.

It localises to the cell membrane. The protein resides in the cell projection. Its subcellular location is the neuron projection. The protein localises to the nucleus. It is found in the cytoplasm. It localises to the perinuclear region. The protein resides in the perikaryon. Its function is as follows. p35 is a neuron specific activator of CDK5. The complex p35/CDK5 is required for neurite outgrowth and cortical lamination. Involved in dendritic spine morphogenesis by mediating the EFNA1-EPHA4 signaling. Activator of TPKII. The complex p35/CDK5 participates in the regulation of the circadian clock by modulating the function of CLOCK protein: phosphorylates CLOCK at 'Thr-451' and 'Thr-461' and regulates the transcriptional activity of the CLOCK-BMAL1 heterodimer in association with altered stability and subcellular distribution. The polypeptide is Cyclin-dependent kinase 5 activator 1 (CDK5R1) (Bos taurus (Bovine)).